The primary structure comprises 772 residues: E3 ubiquitin-protein ligase UHRF1 (772 aa).

The Ubiquitin-like domain occupies 1–77 (MWIQVRTMDG…IVQLLVRQIP (77 aa)). The disordered stretch occupies residues 90-111 (SDASAGCGSGQRDSDSGSGEGA). Tudor-like regions lie at residues 129–205 (SLYK…LRAR) and 212–281 (EIKV…IEEP). The interval 291 to 299 (PQKRQNGPE) is linker. The segment at 297 to 364 (GPECKHCKDN…DWYCPDCRND (68 aa)) adopts a PHD-type zinc-finger fold. Histone H3R2me0 binding stretches follow at residues 331-335 (CDECD) and 351-353 (PQD). Residues 417-580 (GPIPGVPVGT…FLVWRYLLRR (164 aa)) enclose the YDG domain. A required to promote base flipping region spans residues 443–444 (HV). Residues 461-462 (AG) and Asp-467 each bind DNA. 2 required for formation of a 5-methylcytosine-binding pocket regions span residues 464–467 (YEDD) and 476–479 (YTGS). Basic and acidic residues predominate over residues 615 to 626 (SKEREKENKTED). The segment at 615-649 (SKEREKENKTEDEPIDSPSKGKRKRNSDNEQTAAK) is disordered. Residues 703 to 742 (CICCQEVVYEPVTTECHHNICKGCLDRSFKALVHSCPACR) form an RING-type zinc finger.

The protein localises to the nucleus. It catalyses the reaction S-ubiquitinyl-[E2 ubiquitin-conjugating enzyme]-L-cysteine + [acceptor protein]-L-lysine = [E2 ubiquitin-conjugating enzyme]-L-cysteine + N(6)-ubiquitinyl-[acceptor protein]-L-lysine.. The protein operates within protein modification; protein ubiquitination. Functionally, multidomain protein that acts as a key epigenetic regulator by bridging DNA methylation and chromatin modification. Specifically recognizes and binds hemimethylated DNA at replication forks via its YDG domain and recruits dnmt1 methyltransferase to ensure faithful propagation of the DNA methylation patterns through DNA replication. In addition to its role in maintenance of DNA methylation, also plays a key role in chromatin modification: through its tudor-like regions and PHD-type zinc fingers, specifically recognizes and binds histone H3 trimethylated at 'Lys-9' (H3K9me3) and unmethylated at 'Arg-2' (H3R2me0), respectively, and recruits chromatin proteins. Enriched in pericentric heterochromatin where it recruits different chromatin modifiers required for this chromatin replication. Also localizes to euchromatic regions where it negatively regulates transcription possibly by impacting DNA methylation and histone modifications. Has E3 ubiquitin-protein ligase activity by mediating the ubiquitination of target proteins. However, it is still unclear how E3 ubiquitin-protein ligase activity is related to its role in chromatin in vivo. The sequence is that of E3 ubiquitin-protein ligase UHRF1 (uhrf1) from Xenopus laevis (African clawed frog).